A 387-amino-acid chain; its full sequence is Phosphoglycerate kinase (387 aa).

Residues 21–23 (DLN), arginine 36, 59–62 (HLGR), arginine 113, and arginine 146 contribute to the substrate site. ATP contacts are provided by residues lysine 197, glutamate 314, and 340–343 (GGDT).

This sequence belongs to the phosphoglycerate kinase family. Monomer.

The protein resides in the cytoplasm. It catalyses the reaction (2R)-3-phosphoglycerate + ATP = (2R)-3-phospho-glyceroyl phosphate + ADP. The protein operates within carbohydrate degradation; glycolysis; pyruvate from D-glyceraldehyde 3-phosphate: step 2/5. This is Phosphoglycerate kinase from Pseudomonas paraeruginosa (strain DSM 24068 / PA7) (Pseudomonas aeruginosa (strain PA7)).